The following is a 362-amino-acid chain: Peptide chain release factor 1 (362 aa).

Gln-237 is modified (N5-methylglutamine).

Belongs to the prokaryotic/mitochondrial release factor family. In terms of processing, methylated by PrmC. Methylation increases the termination efficiency of RF1.

The protein resides in the cytoplasm. Its function is as follows. Peptide chain release factor 1 directs the termination of translation in response to the peptide chain termination codons UAG and UAA. This Marinomonas sp. (strain MWYL1) protein is Peptide chain release factor 1.